Here is a 109-residue protein sequence, read N- to C-terminus: V-type proton ATPase 16 kDa proteolipid subunit (109 aa).

Residues V1–I20 traverse the membrane as a helical segment. The Lumenal segment spans residues S21 to H39. Residues L40 to G61 form a helical membrane-spanning segment. The Cytoplasmic portion of the chain corresponds to D62 to K73. The chain crosses the membrane as a helical span at residues L74–L99. Residues S100–D109 are Lumenal-facing.

It belongs to the V-ATPase proteolipid subunit family. As to quaternary structure, V-ATPase is a heteromultimeric enzyme composed of a peripheral catalytic V1 complex (main components: subunits A, B, C, D, E, and F) attached to an integral membrane V0 proton pore complex (main component: the proteolipid protein; which is present as a hexamer that forms the proton-conducting pore). In terms of tissue distribution, high expression in the mesocotyl tip of etiolated seedlings compared to the base.

It localises to the vacuole membrane. In terms of biological role, proton-conducting pore forming subunit of the membrane integral V0 complex of vacuolar ATPase. V-ATPase is responsible for acidifying a variety of intracellular compartments in eukaryotic cells. The polypeptide is V-type proton ATPase 16 kDa proteolipid subunit (Zea mays (Maize)).